Reading from the N-terminus, the 95-residue chain is Feather keratin B-4 (95 aa).

Residue Ser1 is modified to N-acetylserine.

This sequence belongs to the avian keratin family. The avian keratins (F-ker, S-ker, C-ker and B-ker) are a complex mixture of very similar polypeptides.

This Columba livia (Rock dove) protein is Feather keratin B-4.